The primary structure comprises 218 residues: Adenylate kinase (218 aa).

Position 10-15 (10-15) interacts with ATP; it reads GAGKGT. The interval 30–59 is NMP; sequence STGDMLRAAVKEGSELGLKVKEIMNSGGLV. Residues Thr31, Arg36, 57–59, 85–88, and Gln92 contribute to the AMP site; these read GLV and GFPR. The LID stretch occupies residues 122–159; it reads GRRVHPGSGRVYHVDYNPPKEEGKDDVTGEALIQRDDD. Residues Arg123 and 132–133 contribute to the ATP site; that span reads VY. The AMP site is built by Arg156 and Arg167. Residue Gly203 participates in ATP binding.

It belongs to the adenylate kinase family. As to quaternary structure, monomer.

It is found in the cytoplasm. It carries out the reaction AMP + ATP = 2 ADP. It participates in purine metabolism; AMP biosynthesis via salvage pathway; AMP from ADP: step 1/1. Functionally, catalyzes the reversible transfer of the terminal phosphate group between ATP and AMP. Plays an important role in cellular energy homeostasis and in adenine nucleotide metabolism. The chain is Adenylate kinase from Chromohalobacter salexigens (strain ATCC BAA-138 / DSM 3043 / CIP 106854 / NCIMB 13768 / 1H11).